The primary structure comprises 78 residues: MEDEIELKTAPADFRFPTTNQTRHCFTRYIEFHRCTTAKGEDANECERFAKYYRALCPGEWVDKWNEQRETGTFPGPL.

In terms of domain architecture, CHCH spans 22 to 65 (TRHCFTRYIEFHRCTTAKGEDANECERFAKYYRALCPGEWVDKW). The Cx9C motif motif lies at 25-35 (CFTRYIEFHRC). Cystine bridges form between Cys-25–Cys-57 and Cys-35–Cys-46. Positions 46–57 (CERFAKYYRALC) match the Cx10C motif motif.

This sequence belongs to the cytochrome c oxidase subunit 6B (TC 3.D.4.8) family. As to expression, expressed in the whole plant.

Its subcellular location is the mitochondrion. Functionally, this protein is one of the nuclear-coded polypeptide chains of cytochrome c oxidase, the terminal oxidase in mitochondrial electron transport. This protein may be one of the heme-binding subunits of the oxidase. This is Cytochrome c oxidase subunit 6b-3 (COX6B-3) from Arabidopsis thaliana (Mouse-ear cress).